The following is a 178-amino-acid chain: Cytochrome b6-f complex iron-sulfur subunit (178 aa).

The helical transmembrane segment at 20–42 (LLTFGTVTGVALGALYPVAQYFT) threads the bilayer. A Rieske domain is found at 71–161 (THPVGDRSLV…VSIEDDQVLV (91 aa)). 4 residues coordinate [2Fe-2S] cluster: Cys-107, His-109, Cys-125, and His-128. An intrachain disulfide couples Cys-112 to Cys-127.

Belongs to the Rieske iron-sulfur protein family. As to quaternary structure, the 4 large subunits of the cytochrome b6-f complex are cytochrome b6, subunit IV (17 kDa polypeptide, PetD), cytochrome f and the Rieske protein, while the 4 small subunits are PetG, PetL, PetM and PetN. The complex functions as a dimer. The cofactor is [2Fe-2S] cluster.

The protein localises to the cellular thylakoid membrane. It catalyses the reaction 2 oxidized [plastocyanin] + a plastoquinol + 2 H(+)(in) = 2 reduced [plastocyanin] + a plastoquinone + 4 H(+)(out). Functionally, component of the cytochrome b6-f complex, which mediates electron transfer between photosystem II (PSII) and photosystem I (PSI), cyclic electron flow around PSI, and state transitions. The sequence is that of Cytochrome b6-f complex iron-sulfur subunit from Prochlorococcus marinus (strain NATL1A).